The primary structure comprises 166 residues: Small ribosomal subunit protein uS5 (166 aa).

Residues 11–74 enclose the S5 DRBM domain; sequence LQEKLIAVNR…EKARRNMKTV (64 aa).

It belongs to the universal ribosomal protein uS5 family. Part of the 30S ribosomal subunit. Contacts proteins S4 and S8.

Functionally, with S4 and S12 plays an important role in translational accuracy. Located at the back of the 30S subunit body where it stabilizes the conformation of the head with respect to the body. This is Small ribosomal subunit protein uS5 from Photorhabdus laumondii subsp. laumondii (strain DSM 15139 / CIP 105565 / TT01) (Photorhabdus luminescens subsp. laumondii).